The chain runs to 209 residues: Urease accessory protein UreG (209 aa).

A GTP-binding site is contributed by 18–25 (GPVGSGKT).

The protein belongs to the SIMIBI class G3E GTPase family. UreG subfamily. As to quaternary structure, homodimer. UreD, UreF and UreG form a complex that acts as a GTP-hydrolysis-dependent molecular chaperone, activating the urease apoprotein by helping to assemble the nickel containing metallocenter of UreC. The UreE protein probably delivers the nickel.

It localises to the cytoplasm. Facilitates the functional incorporation of the urease nickel metallocenter. This process requires GTP hydrolysis, probably effectuated by UreG. The chain is Urease accessory protein UreG from Cupriavidus necator (strain ATCC 17699 / DSM 428 / KCTC 22496 / NCIMB 10442 / H16 / Stanier 337) (Ralstonia eutropha).